A 152-amino-acid polypeptide reads, in one-letter code: Protein Smg homolog (152 aa).

Belongs to the Smg family.

The sequence is that of Protein Smg homolog from Nitrosomonas eutropha (strain DSM 101675 / C91 / Nm57).